The sequence spans 102 residues: Small ribosomal subunit protein uS10 (102 aa).

This sequence belongs to the universal ribosomal protein uS10 family. Part of the 30S ribosomal subunit.

Functionally, involved in the binding of tRNA to the ribosomes. The protein is Small ribosomal subunit protein uS10 of Streptococcus pyogenes serotype M3 (strain SSI-1).